The sequence spans 250 residues: Histidine utilization repressor (250 aa).

One can recognise an HTH gntR-type domain in the interval 20–88 (APLYARVKQM…QGVGTFVAEP (69 aa)). A DNA-binding region (H-T-H motif) is located at residues 48–67 (ESELVSQLGFSRMTINRALR).

It functions in the pathway amino-acid degradation; L-histidine degradation into L-glutamate [regulation]. In terms of biological role, repressor which binds to the hutP region in the histidine utilization (hut) operon. It blocks the expression of all the hut genes in the absence of inducer. The chain is Histidine utilization repressor (hutC) from Pseudomonas aeruginosa (strain ATCC 15692 / DSM 22644 / CIP 104116 / JCM 14847 / LMG 12228 / 1C / PRS 101 / PAO1).